A 378-amino-acid polypeptide reads, in one-letter code: Cytochrome P450 2C15 (378 aa).

Heme is bound at residue C323.

Belongs to the cytochrome P450 family. Heme serves as cofactor.

It localises to the endoplasmic reticulum membrane. It is found in the microsome membrane. It catalyses the reaction an organic molecule + reduced [NADPH--hemoprotein reductase] + O2 = an alcohol + oxidized [NADPH--hemoprotein reductase] + H2O + H(+). Its function is as follows. Cytochromes P450 are a group of heme-thiolate monooxygenases. In liver microsomes, this enzyme is involved in an NADPH-dependent electron transport pathway. It oxidizes a variety of structurally unrelated compounds, including steroids, fatty acids, and xenobiotics. The sequence is that of Cytochrome P450 2C15 (CYP2C15) from Oryctolagus cuniculus (Rabbit).